The following is a 79-amino-acid chain: Cytochrome b (79 aa).

Helical transmembrane passes span 1-7, 31-52, and 67-79; these read SALFLAM, WLIR…YLHI, and WNIG…LTMA. Residues histidine 37 and histidine 51 each coordinate heme b.

Belongs to the cytochrome b family. As to quaternary structure, the cytochrome bc1 complex contains 11 subunits: 3 respiratory subunits (MT-CYB, CYC1 and UQCRFS1), 2 core proteins (UQCRC1 and UQCRC2) and 6 low-molecular weight proteins (UQCRH/QCR6, UQCRB/QCR7, UQCRQ/QCR8, UQCR10/QCR9, UQCR11/QCR10 and a cleavage product of UQCRFS1). This cytochrome bc1 complex then forms a dimer. The cofactor is heme b.

The protein resides in the mitochondrion inner membrane. In terms of biological role, component of the ubiquinol-cytochrome c reductase complex (complex III or cytochrome b-c1 complex) that is part of the mitochondrial respiratory chain. The b-c1 complex mediates electron transfer from ubiquinol to cytochrome c. Contributes to the generation of a proton gradient across the mitochondrial membrane that is then used for ATP synthesis. This Dipodomys heermanni (Heermann's kangaroo rat) protein is Cytochrome b (MT-CYB).